Here is a 537-residue protein sequence, read N- to C-terminus: Chaperonin GroEL 1 (537 aa).

ATP contacts are provided by residues threonine 29 to proline 32, aspartate 86 to threonine 90, glycine 413, asparagine 478 to alanine 480, and aspartate 494.

This sequence belongs to the chaperonin (HSP60) family. Forms a cylinder of 14 subunits composed of two heptameric rings stacked back-to-back. Interacts with the co-chaperonin GroES.

It localises to the cytoplasm. It carries out the reaction ATP + H2O + a folded polypeptide = ADP + phosphate + an unfolded polypeptide.. Its function is as follows. Together with its co-chaperonin GroES, plays an essential role in assisting protein folding. The GroEL-GroES system forms a nano-cage that allows encapsulation of the non-native substrate proteins and provides a physical environment optimized to promote and accelerate protein folding. This is Chaperonin GroEL 1 from Corynebacterium efficiens (strain DSM 44549 / YS-314 / AJ 12310 / JCM 11189 / NBRC 100395).